A 537-amino-acid chain; its full sequence is ATP-dependent 6-phosphofructokinase 5, chloroplastic (537 aa).

The transit peptide at 1 to 52 (MDALSQAISSGISVPYKNNSSSLVPSHGLTSLILRKSRSPVNPSSRSRVSVR) directs the protein to the chloroplast. The disordered stretch occupies residues 35–64 (RKSRSPVNPSSRSRVSVRASEIQHSKTSAS). Low complexity predominate over residues 39–54 (SPVNPSSRSRVSVRAS). A Phosphoserine modification is found at S147. ATP-binding positions include G189, 253-254 (RG), and 278-281 (GNGT). Mg(2+) is bound at residue N279. Substrate is bound by residues 307–309 (TID), 352–354 (MGR), E408, and 460–463 (YMIR). The active-site Proton acceptor is the D309.

It belongs to the phosphofructokinase type A (PFKA) family. PPi-dependent PFK group II subfamily. Atypical ATP-dependent clade 'X' sub-subfamily. As to quaternary structure, homotetramer. It depends on Mg(2+) as a cofactor. As to expression, expressed in roots, leaves, stems and flowers.

The protein resides in the plastid. The protein localises to the chloroplast. The catalysed reaction is beta-D-fructose 6-phosphate + ATP = beta-D-fructose 1,6-bisphosphate + ADP + H(+). Its pathway is carbohydrate degradation; glycolysis; D-glyceraldehyde 3-phosphate and glycerone phosphate from D-glucose: step 3/4. Its activity is regulated as follows. Allosterically activated by AMP. Its function is as follows. Catalyzes the phosphorylation of D-fructose 6-phosphate to fructose 1,6-bisphosphate by ATP, the first committing step of glycolysis. This Arabidopsis thaliana (Mouse-ear cress) protein is ATP-dependent 6-phosphofructokinase 5, chloroplastic.